The following is a 436-amino-acid chain: Citrate synthase (436 aa).

Residues His311 and Asp370 contribute to the active site.

Belongs to the citrate synthase family.

The enzyme catalyses oxaloacetate + acetyl-CoA + H2O = citrate + CoA + H(+). It functions in the pathway carbohydrate metabolism; tricarboxylic acid cycle; isocitrate from oxaloacetate: step 1/2. This chain is Citrate synthase (gltA), found in Rickettsia typhi (strain ATCC VR-144 / Wilmington).